Reading from the N-terminus, the 67-residue chain is Small ribosomal subunit protein eS17 (67 aa).

The protein belongs to the eukaryotic ribosomal protein eS17 family.

This chain is Small ribosomal subunit protein eS17, found in Thermococcus gammatolerans (strain DSM 15229 / JCM 11827 / EJ3).